A 53-amino-acid polypeptide reads, in one-letter code: Small ribosomal subunit protein uS14 (53 aa).

Zn(2+)-binding residues include cysteine 17, cysteine 20, cysteine 36, and cysteine 39.

Belongs to the universal ribosomal protein uS14 family. Zinc-binding uS14 subfamily. Part of the 30S ribosomal subunit. Zn(2+) serves as cofactor.

Functionally, binds 16S rRNA, required for the assembly of 30S particles. The protein is Small ribosomal subunit protein uS14 of Methanocaldococcus jannaschii (strain ATCC 43067 / DSM 2661 / JAL-1 / JCM 10045 / NBRC 100440) (Methanococcus jannaschii).